Consider the following 1300-residue polypeptide: Serine protease EspP (1300 aa).

A signal peptide spans 1-55; that stretch reads MNKIYSLKYSHITGGLIAVSELSGRVSSRATGKKKHKRILALCFLGLLQSSYSFA. Positions 57 to 311 constitute a Peptidase S6 domain; the sequence is QMDISNFYIR…NQTTIDNLKN (255 aa). Residues His127, Asp156, and Ser263 each act as charge relay system in the active site. Residues 1034–1300 form the Autotransporter domain; sequence DINGEAGAWA…AVNANFRYSF (267 aa).

Post-translationally, cleaved to release the mature protein from the outer membrane.

The protein localises to the periplasm. It localises to the secreted. Its subcellular location is the cell surface. It is found in the cell outer membrane. Inhibition of cytotoxic activity by phenylmethylsulfonyl fluoride. Functionally, serine protease capable of cleaving pepsin A and human coagulation factor V, which may contribute to the mucosal hemorrhage observed in hemorrhagic colitis. The sequence is that of Serine protease EspP (espP) from Escherichia coli O157:H7.